Consider the following 494-residue polypeptide: UPF0371 protein stu1377 (494 aa).

Belongs to the UPF0371 family.

The sequence is that of UPF0371 protein stu1377 from Streptococcus thermophilus (strain ATCC BAA-250 / LMG 18311).